Reading from the N-terminus, the 351-residue chain is Heat-inducible transcription repressor HrcA (351 aa).

Belongs to the HrcA family.

Functionally, negative regulator of class I heat shock genes (grpE-dnaK-dnaJ and groELS operons). Prevents heat-shock induction of these operons. This Mycoplasma pneumoniae (strain ATCC 29342 / M129 / Subtype 1) (Mycoplasmoides pneumoniae) protein is Heat-inducible transcription repressor HrcA.